The sequence spans 80 residues: Defensin-like protein 204 (80 aa).

The first 29 residues, 1–29 (MAKTFSSICFTTLLLVVLFISTEIPKSEA), serve as a signal peptide directing secretion. Intrachain disulfides connect Cys43–Cys64, Cys48–Cys73, and Cys52–Cys75.

It belongs to the DEFL family.

It localises to the secreted. This Arabidopsis thaliana (Mouse-ear cress) protein is Defensin-like protein 204.